Consider the following 183-residue polypeptide: Adenine phosphoribosyltransferase (183 aa).

This sequence belongs to the purine/pyrimidine phosphoribosyltransferase family. As to quaternary structure, homodimer.

The protein resides in the cytoplasm. It catalyses the reaction AMP + diphosphate = 5-phospho-alpha-D-ribose 1-diphosphate + adenine. Its pathway is purine metabolism; AMP biosynthesis via salvage pathway; AMP from adenine: step 1/1. Its function is as follows. Catalyzes a salvage reaction resulting in the formation of AMP, that is energically less costly than de novo synthesis. The chain is Adenine phosphoribosyltransferase from Shewanella halifaxensis (strain HAW-EB4).